A 256-amino-acid chain; its full sequence is uncharacterized protein (256 aa).

Helical transmembrane passes span 42–62, 73–93, and 108–128; these read LIAL…IWFF, FFTL…LIFL, and WLFL…WLIV.

The protein resides in the cell membrane. This is an uncharacterized protein from Mycoplasma genitalium (strain ATCC 33530 / DSM 19775 / NCTC 10195 / G37) (Mycoplasmoides genitalium).